The following is a 339-amino-acid chain: NADPH dehydrogenase (339 aa).

21-24 (PPMC) contacts FMN. Y26 contacts substrate. Residues A57 and Q99 each coordinate FMN. Position 162 to 165 (162 to 165 (HGAH)) interacts with substrate. FMN is bound by residues R215 and 307–308 (GR).

It belongs to the NADH:flavin oxidoreductase/NADH oxidase family. NamA subfamily. In terms of assembly, homotetramer. It depends on FMN as a cofactor.

The catalysed reaction is A + NADPH + H(+) = AH2 + NADP(+). Catalyzes the reduction of the double bond of an array of alpha,beta-unsaturated aldehydes and ketones. It also reduces the nitro group of nitroester and nitroaromatic compounds. It could have a role in detoxification processes. This is NADPH dehydrogenase from Clostridium acetobutylicum (strain ATCC 824 / DSM 792 / JCM 1419 / IAM 19013 / LMG 5710 / NBRC 13948 / NRRL B-527 / VKM B-1787 / 2291 / W).